We begin with the raw amino-acid sequence, 209 residues long: Uracil phosphoribosyltransferase (209 aa).

5-phospho-alpha-D-ribose 1-diphosphate is bound by residues R79, R104, and D131–S139. Residues I194 and G199–A201 contribute to the uracil site. D200 lines the 5-phospho-alpha-D-ribose 1-diphosphate pocket.

This sequence belongs to the UPRTase family. Mg(2+) is required as a cofactor.

It carries out the reaction UMP + diphosphate = 5-phospho-alpha-D-ribose 1-diphosphate + uracil. It functions in the pathway pyrimidine metabolism; UMP biosynthesis via salvage pathway; UMP from uracil: step 1/1. With respect to regulation, allosterically activated by GTP. Functionally, catalyzes the conversion of uracil and 5-phospho-alpha-D-ribose 1-diphosphate (PRPP) to UMP and diphosphate. The polypeptide is Uracil phosphoribosyltransferase (Bacillus pumilus (strain SAFR-032)).